Consider the following 299-residue polypeptide: Tyrosine recombinase XerC (299 aa).

Residues 1 to 85 enclose the Core-binding (CB) domain; the sequence is MKRQLEAYCA…AVRGLYRYLN (85 aa). The Tyr recombinase domain maps to 106-285; the sequence is RLPKVLDTDR…DFQHLAAVYD (180 aa). Residues arginine 146, lysine 170, histidine 237, arginine 240, and histidine 263 contribute to the active site. Tyrosine 272 functions as the O-(3'-phospho-DNA)-tyrosine intermediate in the catalytic mechanism.

This sequence belongs to the 'phage' integrase family. XerC subfamily. Forms a cyclic heterotetrameric complex composed of two molecules of XerC and two molecules of XerD.

Its subcellular location is the cytoplasm. Site-specific tyrosine recombinase, which acts by catalyzing the cutting and rejoining of the recombining DNA molecules. The XerC-XerD complex is essential to convert dimers of the bacterial chromosome into monomers to permit their segregation at cell division. It also contributes to the segregational stability of plasmids. This chain is Tyrosine recombinase XerC, found in Pseudomonas putida (strain ATCC 700007 / DSM 6899 / JCM 31910 / BCRC 17059 / LMG 24140 / F1).